Consider the following 353-residue polypeptide: 3-isopropylmalate dehydrogenase (353 aa).

73–86 (GPQYDTLDRPLRPE) serves as a coordination point for NAD(+). Residues R93, R103, R131, and D220 each coordinate substrate. 3 residues coordinate Mg(2+): D220, D244, and D248. NAD(+) is bound at residue 278–290 (GSAPDIAGKNLAN).

It belongs to the isocitrate and isopropylmalate dehydrogenases family. LeuB type 1 subfamily. In terms of assembly, homodimer. Mg(2+) is required as a cofactor. The cofactor is Mn(2+).

The protein resides in the cytoplasm. It catalyses the reaction (2R,3S)-3-isopropylmalate + NAD(+) = 4-methyl-2-oxopentanoate + CO2 + NADH. Its pathway is amino-acid biosynthesis; L-leucine biosynthesis; L-leucine from 3-methyl-2-oxobutanoate: step 3/4. In terms of biological role, catalyzes the oxidation of 3-carboxy-2-hydroxy-4-methylpentanoate (3-isopropylmalate) to 3-carboxy-4-methyl-2-oxopentanoate. The product decarboxylates to 4-methyl-2 oxopentanoate. This Thiobacillus denitrificans (strain ATCC 25259 / T1) protein is 3-isopropylmalate dehydrogenase.